The following is a 198-amino-acid chain: Recombination protein RecR (198 aa).

Residues 57–72 (CRVCANIADENPCGIC) form a C4-type zinc finger. Residues 80-175 (GLICVVERPR…RVTRLAFGLP (96 aa)) enclose the Toprim domain.

This sequence belongs to the RecR family.

In terms of biological role, may play a role in DNA repair. It seems to be involved in an RecBC-independent recombinational process of DNA repair. It may act with RecF and RecO. The sequence is that of Recombination protein RecR from Desulforudis audaxviator (strain MP104C).